We begin with the raw amino-acid sequence, 238 residues long: Ribosomal RNA small subunit methyltransferase G (238 aa).

Residues Gly-78, Phe-83, 129 to 130, and Arg-148 contribute to the S-adenosyl-L-methionine site; that span reads AE. A disordered region spans residues 216–238; that stretch reads EKKKETPKKYPRKAGTPAKNPIK.

It belongs to the methyltransferase superfamily. RNA methyltransferase RsmG family.

It localises to the cytoplasm. Specifically methylates the N7 position of a guanine in 16S rRNA. The sequence is that of Ribosomal RNA small subunit methyltransferase G from Lactococcus lactis subsp. lactis (strain IL1403) (Streptococcus lactis).